The primary structure comprises 104 residues: uncharacterized protein (104 aa).

This is an uncharacterized protein from Acidithiobacillus ferridurans.